A 466-amino-acid polypeptide reads, in one-letter code: Glutamate--tRNA ligase 1 (466 aa).

Residues 9-19 carry the 'HIGH' region motif; that stretch reads PSPTGMLHIGG. The short motif at 238–242 is the 'KMSKS' region element; that stretch reads KLSKR. Lys-241 provides a ligand contact to ATP.

The protein belongs to the class-I aminoacyl-tRNA synthetase family. Glutamate--tRNA ligase type 1 subfamily. As to quaternary structure, monomer.

The protein localises to the cytoplasm. It catalyses the reaction tRNA(Glu) + L-glutamate + ATP = L-glutamyl-tRNA(Glu) + AMP + diphosphate. In terms of biological role, catalyzes the attachment of glutamate to tRNA(Glu) in a two-step reaction: glutamate is first activated by ATP to form Glu-AMP and then transferred to the acceptor end of tRNA(Glu). This is Glutamate--tRNA ligase 1 from Acidiphilium cryptum (strain JF-5).